The following is a 421-amino-acid chain: Putative transporter AmpG 3 (421 aa).

12 helical membrane-spanning segments follow: residues 6-26 (YLIG…LIFF), 41-61 (IIGA…WSPF), 80-100 (WALV…KRSP), 104-124 (LCIT…QDIV), 139-159 (LSIV…LGSV), 166-186 (IIFG…VGPI), 230-250 (LLLI…PMAM), 274-294 (LLIM…IGIF), 297-317 (VLIG…LATI), 324-344 (FIIT…IISI), 360-380 (AISA…GGIC), and 388-408 (VFFL…YTIY).

It belongs to the major facilitator superfamily.

Its subcellular location is the cell inner membrane. The sequence is that of Putative transporter AmpG 3 (ampG3) from Rickettsia prowazekii (strain Madrid E).